A 62-amino-acid chain; its full sequence is Large ribosomal subunit protein uL30 (62 aa).

This sequence belongs to the universal ribosomal protein uL30 family. As to quaternary structure, part of the 50S ribosomal subunit.

This Shewanella frigidimarina (strain NCIMB 400) protein is Large ribosomal subunit protein uL30.